Consider the following 87-residue polypeptide: U3-theraphotoxin-Hhn1b (87 aa).

The N-terminal stretch at 1-24 is a signal peptide; sequence MVNMKASMFLTFAGLVLLFVVCYA. The propeptide occupies 25–52; it reads SESEEKEFPREMLSSIFAVDNDFKQEER. 2 disulfides stabilise this stretch: C54/C67 and C61/C72.

The protein belongs to the neurotoxin 10 (Hwtx-1) family. 51 (Hntx-8) subfamily. Hntx-8 sub-subfamily. As to expression, expressed by the venom gland.

The protein localises to the secreted. Its function is as follows. Ion channel inhibitor. The polypeptide is U3-theraphotoxin-Hhn1b (Cyriopagopus hainanus (Chinese bird spider)).